A 948-amino-acid chain; its full sequence is Protocadherin alpha-2 (948 aa).

Residues 1–22 (MASSIRRGLGAWTRLLSLLLLA) form the signal peptide. At 23 to 697 (AWEVGSGQLR…GSEATLVDVN (675 aa)) the chain is on the extracellular side. 6 consecutive Cadherin domains span residues 30–133 (QLRY…PPVF), 157–242 (ASDA…EPTF), 243–350 (AQSV…TPEV), 351–455 (SITS…APAF), 456–565 (AQPE…APAL), and 588–678 (GHVV…APKA). N-linked (GlcNAc...) asparagine glycans are attached at residues Asn257, Asn265, Asn362, and Asn548. A helical transmembrane segment spans residues 698–718 (VYLIIAICAVSSLLVLTVLLY). The Cytoplasmic portion of the chain corresponds to 719–948 (TALRCSVPAT…GNSTTDNSDQ (230 aa)). The stretch at 734–737 (PGKP) is one PXXP 1 repeat. Residues 734 to 892 (PGKPTLVCSS…PDKFIIPGSP (159 aa)) are 5 X 4 AA repeats of P-X-X-P. Disordered regions lie at residues 755-801 (RQRV…RQPN), 829-854 (GPGG…EVSP), and 868-948 (KYGP…NSDQ). Residues 783–795 (AEEKQLSESEYVG) are compositionally biased toward basic and acidic residues. PXXP repeat units follow at residues 797-800 (PRQP), 830-833 (PGGP), 871-874 (PGNP), and 889-892 (PGSP). Positions 907–921 (DKSDFITFGKKEETK) are enriched in basic and acidic residues.

The protein localises to the cell membrane. Potential calcium-dependent cell-adhesion protein. May be involved in the establishment and maintenance of specific neuronal connections in the brain. The polypeptide is Protocadherin alpha-2 (PCDHA2) (Pan troglodytes (Chimpanzee)).